The sequence spans 510 residues: Leucine-rich repeat-containing protein 53 (510 aa).

LRR repeat units follow at residues 34–55 (TTRV…NLSL), 58–79 (NLAL…ALDG), 82–102 (MLRT…TDHT), 108–129 (SLQV…WFRN), 132–153 (GLTR…SFGG), 158–179 (SLRH…AFRP), and 182–203 (QLQE…FTPL). Positions 214-271 (NQWSCTCDLHPLARFLRNYIKSSAHTLRNAKDLNCQPSTAAVAAAQSVLRLSETNCDP) constitute an LRRCT domain. A helical transmembrane segment spans residues 294-314 (LLTVLGFAGAVGLTCLGLVVF).

The protein localises to the membrane. This chain is Leucine-rich repeat-containing protein 53 (LRRC53), found in Macaca fascicularis (Crab-eating macaque).